Reading from the N-terminus, the 247-residue chain is tRNA (guanine-N(7)-)-methyltransferase (247 aa).

S-adenosyl-L-methionine is bound by residues glycine 70, 93–94 (EI), 128–129 (NA), and leucine 148. Aspartate 151 is an active-site residue. Position 226–228 (226–228 (SEE)) interacts with S-adenosyl-L-methionine.

It belongs to the class I-like SAM-binding methyltransferase superfamily. TrmB family.

Its subcellular location is the nucleus. It carries out the reaction guanosine(46) in tRNA + S-adenosyl-L-methionine = N(7)-methylguanosine(46) in tRNA + S-adenosyl-L-homocysteine. It functions in the pathway tRNA modification; N(7)-methylguanine-tRNA biosynthesis. Catalyzes the formation of N(7)-methylguanine at position 46 (m7G46) in tRNA. The chain is tRNA (guanine-N(7)-)-methyltransferase from Drosophila pseudoobscura pseudoobscura (Fruit fly).